A 78-amino-acid chain; its full sequence is Small ribosomal subunit protein bS18 (78 aa).

This sequence belongs to the bacterial ribosomal protein bS18 family. Part of the 30S ribosomal subunit. Forms a tight heterodimer with protein bS6.

Its function is as follows. Binds as a heterodimer with protein bS6 to the central domain of the 16S rRNA, where it helps stabilize the platform of the 30S subunit. The polypeptide is Small ribosomal subunit protein bS18 (Thermobifida fusca (strain YX)).